A 180-amino-acid chain; its full sequence is Regulator of G-protein signaling 8 (180 aa).

Position 26 is a phosphoserine (Ser-26). Residues 56–171 (SFDVLLSHKY…FLRSKMYLDL (116 aa)) enclose the RGS domain.

In terms of assembly, interacts with GNAO1 and GNAI3. In terms of tissue distribution, expressed at high levels in brain. Very little expression detected in other tissues. Detected in Purkinje cells in the cerebellum.

It localises to the cell membrane. The protein resides in the membrane. Its subcellular location is the perikaryon. The protein localises to the cell projection. It is found in the dendrite. It localises to the nucleus. In terms of biological role, regulates G protein-coupled receptor signaling cascades, including signaling via muscarinic acetylcholine receptor CHRM2 and dopamine receptor DRD2. Inhibits signal transduction by increasing the GTPase activity of G protein alpha subunits, thereby driving them into their inactive GDP-bound form. Modulates the activity of potassium channels that are activated in response to DRD2 and CHRM2 signaling. The chain is Regulator of G-protein signaling 8 (Rgs8) from Rattus norvegicus (Rat).